A 143-amino-acid chain; its full sequence is Transcriptional regulator MraZ (143 aa).

2 SpoVT-AbrB domains span residues 5–47 (TYTP…PRDE) and 76–119 (TDEQ…DAQA).

The protein belongs to the MraZ family. As to quaternary structure, forms oligomers.

The protein resides in the cytoplasm. It is found in the nucleoid. The sequence is that of Transcriptional regulator MraZ from Mycolicibacterium smegmatis (strain ATCC 700084 / mc(2)155) (Mycobacterium smegmatis).